The primary structure comprises 712 residues: Polyribonucleotide nucleotidyltransferase (712 aa).

Residues D484 and D490 each coordinate Mg(2+). Positions 550–609 (PKYKTMDVNPEKIRVLIGPGGKNIKAIIEETGSDVEIQDSGVVNIFAPDTPTLDKTIKLI) constitute a KH domain. Residues 619 to 686 (GEVYDGIVKD…KGGKYSLSRK (68 aa)) enclose the S1 motif domain.

This sequence belongs to the polyribonucleotide nucleotidyltransferase family. The cofactor is Mg(2+).

It localises to the cytoplasm. The enzyme catalyses RNA(n+1) + phosphate = RNA(n) + a ribonucleoside 5'-diphosphate. Involved in mRNA degradation. Catalyzes the phosphorolysis of single-stranded polyribonucleotides processively in the 3'- to 5'-direction. The polypeptide is Polyribonucleotide nucleotidyltransferase (Brachyspira hyodysenteriae (strain ATCC 49526 / WA1)).